The chain runs to 306 residues: UDP-3-O-acyl-N-acetylglucosamine deacetylase (306 aa).

Zn(2+) is bound by residues H79, H238, and D242. Catalysis depends on H265, which acts as the Proton donor.

The protein belongs to the LpxC family. The cofactor is Zn(2+).

The enzyme catalyses a UDP-3-O-[(3R)-3-hydroxyacyl]-N-acetyl-alpha-D-glucosamine + H2O = a UDP-3-O-[(3R)-3-hydroxyacyl]-alpha-D-glucosamine + acetate. It participates in glycolipid biosynthesis; lipid IV(A) biosynthesis; lipid IV(A) from (3R)-3-hydroxytetradecanoyl-[acyl-carrier-protein] and UDP-N-acetyl-alpha-D-glucosamine: step 2/6. Functionally, catalyzes the hydrolysis of UDP-3-O-myristoyl-N-acetylglucosamine to form UDP-3-O-myristoylglucosamine and acetate, the committed step in lipid A biosynthesis. The chain is UDP-3-O-acyl-N-acetylglucosamine deacetylase from Shewanella oneidensis (strain ATCC 700550 / JCM 31522 / CIP 106686 / LMG 19005 / NCIMB 14063 / MR-1).